The following is a 387-amino-acid chain: Succinate--CoA ligase [ADP-forming] subunit beta (387 aa).

Residues 9–244 (KQLFASYGLP…VSQEDDRENR (236 aa)) enclose the ATP-grasp domain. ATP-binding positions include K46, 53–55 (GRG), E99, C102, and E107. 2 residues coordinate Mg(2+): N199 and D213. Substrate contacts are provided by residues N264 and 321–323 (GIV).

The protein belongs to the succinate/malate CoA ligase beta subunit family. As to quaternary structure, heterotetramer of two alpha and two beta subunits. The cofactor is Mg(2+).

The catalysed reaction is succinate + ATP + CoA = succinyl-CoA + ADP + phosphate. It catalyses the reaction GTP + succinate + CoA = succinyl-CoA + GDP + phosphate. The protein operates within carbohydrate metabolism; tricarboxylic acid cycle; succinate from succinyl-CoA (ligase route): step 1/1. Its function is as follows. Succinyl-CoA synthetase functions in the citric acid cycle (TCA), coupling the hydrolysis of succinyl-CoA to the synthesis of either ATP or GTP and thus represents the only step of substrate-level phosphorylation in the TCA. The beta subunit provides nucleotide specificity of the enzyme and binds the substrate succinate, while the binding sites for coenzyme A and phosphate are found in the alpha subunit. This chain is Succinate--CoA ligase [ADP-forming] subunit beta, found in Legionella pneumophila (strain Paris).